We begin with the raw amino-acid sequence, 429 residues long: Serine hydroxymethyltransferase (429 aa).

Residues Leu-130 and 134–136 (GHL) each bind (6S)-5,6,7,8-tetrahydrofolate. Lys-239 bears the N6-(pyridoxal phosphate)lysine mark.

The protein belongs to the SHMT family. As to quaternary structure, homodimer. It depends on pyridoxal 5'-phosphate as a cofactor.

It localises to the cytoplasm. It catalyses the reaction (6R)-5,10-methylene-5,6,7,8-tetrahydrofolate + glycine + H2O = (6S)-5,6,7,8-tetrahydrofolate + L-serine. Its pathway is one-carbon metabolism; tetrahydrofolate interconversion. The protein operates within amino-acid biosynthesis; glycine biosynthesis; glycine from L-serine: step 1/1. Catalyzes the reversible interconversion of serine and glycine with tetrahydrofolate (THF) serving as the one-carbon carrier. This reaction serves as the major source of one-carbon groups required for the biosynthesis of purines, thymidylate, methionine, and other important biomolecules. Also exhibits THF-independent aldolase activity toward beta-hydroxyamino acids, producing glycine and aldehydes, via a retro-aldol mechanism. This is Serine hydroxymethyltransferase from Phenylobacterium zucineum (strain HLK1).